Consider the following 396-residue polypeptide: MNFSCLGLSKICFLVSVIFCTFLLLFIPKTKTPWRPRTYPQPRPPPLFNATCGKQFALPGIEHAQQKLPTHTTDITHFEDPGNVEDWRAYILGRENPDEKHEGPTDNPGEHKSVLASSINSSKDALEFEDLFIAVKTTRKYHKTRLDLLLQTWISRAKQQTFIFTDGEDQDLRQRAGIQVINTNCSAMHTRQALCCKMAVEYDKFIESERKWFCHVDDDNYVNLFSLRHLLASFSHSQDVYLGRPSLDHPIEAIERVKSDGSASVRFWFATGGAGFCISRGLALKMSPWASMGNFITTAELVRLPDDCTIGYIIEGLLGVKMHHTPLFHSHLENLQRLPLQSVLKQVTLSYGGPDNKRNVVSVGGIFSLENDPTRFRTVHCLLYPDTHWCPPRKTR.

The Cytoplasmic portion of the chain corresponds to 1–6 (MNFSCL). The chain crosses the membrane as a helical; Signal-anchor for type II membrane protein span at residues 7 to 27 (GLSKICFLVSVIFCTFLLLFI). The Lumenal portion of the chain corresponds to 28 to 396 (PKTKTPWRPR…THWCPPRKTR (369 aa)). N-linked (GlcNAc...) asparagine glycosylation is found at N49 and N120. R145 serves as a coordination point for substrate. N-linked (GlcNAc...) asparagine glycosylation occurs at N184. Cystine bridges form between C185-C196 and C214-C277. Position 218 (D218) interacts with substrate. Mn(2+) is bound at residue D219. The active site involves D307. H331 contacts Mn(2+). C381 and C390 are disulfide-bonded.

It belongs to the glycosyltransferase 31 family. Requires Mn(2+) as cofactor. Detected in the mesanchymal region of the developing limb. Expressed in mesoderm but not in ectoderm with no evident boundary of expression.

The protein localises to the golgi apparatus membrane. The enzyme catalyses 3-O-(alpha-L-fucosyl)-L-threonyl-[EGF-like domain protein] + UDP-N-acetyl-alpha-D-glucosamine = 3-O-(N-acetyl-beta-D-glucosaminyl-(1-&gt;3)-alpha-L-fucosyl)-L-threonyl-[EGF-like domain protein] + UDP + H(+). It catalyses the reaction 3-O-(alpha-L-fucosyl)-L-seryl-[EGF-like domain protein] + UDP-N-acetyl-alpha-D-glucosamine = 3-O-(N-acetyl-beta-D-glucosaminyl-(1-&gt;3)-alpha-L-fucosyl)-L-seryl-[EGF-like domain protein] + UDP + H(+). Glycosyltransferase that initiates the elongation of O-linked fucose residues attached to EGF-like repeats in the extracellular domain of Notch molecules. Involved in forelimb development and in adult forelimb regeneration. The chain is Beta-1,3-N-acetylglucosaminyltransferase radical fringe (RFNG) from Notophthalmus viridescens (Eastern newt).